Here is a 449-residue protein sequence, read N- to C-terminus: Chromosomal replication initiator protein DnaA (449 aa).

The interval 1–72 (MPNLEELWAY…VEGVYEFAQL (72 aa)) is domain I, interacts with DnaA modulators. The interval 72–109 (LEVDPVIMTKDELQPAPATDQRPAVEEDDQNLTFKAKT) is domain II. The tract at residues 110–326 (HLNPKYTFDR…GALVRVQAFS (217 aa)) is domain III, AAA+ region. ATP is bound by residues G154, G156, K157, and T158. Positions 327 to 449 (TMKNEDITTS…ELRNILKNRG (123 aa)) are domain IV, binds dsDNA.

This sequence belongs to the DnaA family. As to quaternary structure, oligomerizes as a right-handed, spiral filament on DNA at oriC.

The protein resides in the cytoplasm. Its function is as follows. Plays an essential role in the initiation and regulation of chromosomal replication. ATP-DnaA binds to the origin of replication (oriC) to initiate formation of the DNA replication initiation complex once per cell cycle. Binds the DnaA box (a 9 base pair repeat at the origin) and separates the double-stranded (ds)DNA. Forms a right-handed helical filament on oriC DNA; dsDNA binds to the exterior of the filament while single-stranded (ss)DNA is stabiized in the filament's interior. The ATP-DnaA-oriC complex binds and stabilizes one strand of the AT-rich DNA unwinding element (DUE), permitting loading of DNA polymerase. After initiation quickly degrades to an ADP-DnaA complex that is not apt for DNA replication. Binds acidic phospholipids. The sequence is that of Chromosomal replication initiator protein DnaA from Lacticaseibacillus casei (strain BL23) (Lactobacillus casei).